The primary structure comprises 277 residues: RNA-binding protein pno-1 (277 aa).

Disordered regions lie at residues 1 to 52 (MATS…KLVK) and 72 to 100 (DEDATADTADDSTGPKSSKRTKGVKGESR). Residues 8 to 27 (FDDELPMEEGMPELLDDEDV) are compositionally biased toward acidic residues. The span at 30–40 (TLPSLLEQNLD) shows a compositional bias: polar residues. A compositionally biased stretch (acidic residues) spans 72–81 (DEDATADTAD). The 53-residue stretch at 198 to 250 (GDHVSRAIGRIAGKDGRTKLVIENTTKTRIVVANTKIHILGAYQNLKLARNAV) folds into the KH domain.

Belongs to the PNO1 family. Part of the small subunit (SSU) processome, composed of more than 70 proteins and the RNA chaperone small nucleolar RNA (snoRNA) U3.

The protein resides in the nucleus. Its subcellular location is the nucleolus. Part of the small subunit (SSU) processome, first precursor of the small eukaryotic ribosomal subunit. During the assembly of the SSU processome in the nucleolus, many ribosome biogenesis factors, an RNA chaperone and ribosomal proteins associate with the nascent pre-rRNA and work in concert to generate RNA folding, modifications, rearrangements and cleavage as well as targeted degradation of pre-ribosomal RNA by the RNA exosome. Positively regulates dimethylation of two adjacent adenosines in the loop of a conserved hairpin near the 3'-end of 18S rRNA. The sequence is that of RNA-binding protein pno-1 from Caenorhabditis elegans.